We begin with the raw amino-acid sequence, 479 residues long: Dihydrolipoyl dehydrogenase (479 aa).

FAD is bound by residues 41–50 (EKRGALGGTC), lysine 59, alanine 124, and 153–155 (TGS). Cysteine 50 and cysteine 55 are oxidised to a cystine. Residues 190–197 (GGGVIGLE), glutamate 213, isoleucine 247, and glycine 284 each bind NAD(+). FAD-binding positions include aspartate 325 and 332–335 (MLAH). Histidine 458 (proton acceptor) is an active-site residue.

This sequence belongs to the class-I pyridine nucleotide-disulfide oxidoreductase family. In terms of assembly, homodimer. Requires FAD as cofactor.

It catalyses the reaction N(6)-[(R)-dihydrolipoyl]-L-lysyl-[protein] + NAD(+) = N(6)-[(R)-lipoyl]-L-lysyl-[protein] + NADH + H(+). The polypeptide is Dihydrolipoyl dehydrogenase (Trypanosoma brucei brucei).